The sequence spans 355 residues: 3-isopropylmalate dehydrogenase (355 aa).

Substrate contacts are provided by Arg-98, Arg-108, Arg-132, and Asp-223. Mg(2+) is bound by residues Asp-223, Asp-247, and Asp-251. 283–295 (GSAPDIAGQQKAD) contacts NAD(+).

It belongs to the isocitrate and isopropylmalate dehydrogenases family. LeuB type 2 subfamily. Homodimer. Mg(2+) serves as cofactor. Requires Mn(2+) as cofactor.

It is found in the cytoplasm. It catalyses the reaction (2R,3S)-3-isopropylmalate + NAD(+) = 4-methyl-2-oxopentanoate + CO2 + NADH. The protein operates within amino-acid biosynthesis; L-leucine biosynthesis; L-leucine from 3-methyl-2-oxobutanoate: step 3/4. Its function is as follows. Catalyzes the oxidation of 3-carboxy-2-hydroxy-4-methylpentanoate (3-isopropylmalate) to 3-carboxy-4-methyl-2-oxopentanoate. The product decarboxylates to 4-methyl-2 oxopentanoate. This Clavibacter sepedonicus (Clavibacter michiganensis subsp. sepedonicus) protein is 3-isopropylmalate dehydrogenase.